A 189-amino-acid chain; its full sequence is Apolipoprotein D (189 aa).

Residues 1–20 form the signal peptide; that stretch reads MGMMLLLLSMLAGLVAEAEG. Q21 carries the pyrrolidone carboxylic acid modification. 2 cysteine pairs are disulfide-bonded: C28–C134 and C61–C185. N-linked (GlcNAc...) asparagine glycans are attached at residues N65 and N98.

It belongs to the calycin superfamily. Lipocalin family. In terms of assembly, homodimer.

The protein resides in the secreted. APOD occurs in the macromolecular complex with lecithin-transport and binding of bilin. Appears to be able to transport a variety of ligands in a number of different contexts. The polypeptide is Apolipoprotein D (APOD) (Cavia porcellus (Guinea pig)).